A 674-amino-acid chain; its full sequence is tRNA wybutosine-synthesizing protein 4 (674 aa).

S-adenosyl-L-methionine is bound by residues Arg84, Gly109, Asp140, 184–185 (DL), and Glu212.

Belongs to the methyltransferase superfamily. LCMT family.

The enzyme catalyses 7-[(3S)-3-amino-3-carboxypropyl]wyosine(37) in tRNA(Phe) + S-adenosyl-L-methionine = 7-[(3S)-(3-amino-3-methoxycarbonyl)propyl]wyosine(37) in tRNA(Phe) + S-adenosyl-L-homocysteine. The catalysed reaction is 7-[(3S)-(3-amino-3-methoxycarbonyl)propyl]wyosine(37) in tRNA(Phe) + S-adenosyl-L-methionine + CO2 = wybutosine(37) in tRNA(Phe) + S-adenosyl-L-homocysteine + 2 H(+). It participates in tRNA modification; wybutosine-tRNA(Phe) biosynthesis. In terms of biological role, probable S-adenosyl-L-methionine-dependent methyltransferase that acts as a component of the wybutosine biosynthesis pathway. Wybutosine is a hyper modified guanosine with a tricyclic base found at the 3'-position adjacent to the anticodon of eukaryotic phenylalanine tRNA. May methylate the carboxyl group of leucine residues to form alpha-leucine ester residues. The protein is tRNA wybutosine-synthesizing protein 4 (PPM2) of Candida glabrata (strain ATCC 2001 / BCRC 20586 / JCM 3761 / NBRC 0622 / NRRL Y-65 / CBS 138) (Yeast).